Consider the following 484-residue polypeptide: Legumin type B (484 aa).

Positions 1 to 22 are cleaved as a signal peptide; that stretch reads MSKPFLSLLSLSLLLFTSTCLA. 2 disulfide bridges follow: cysteine 33-cysteine 66 and cysteine 109-cysteine 310. Positions 38–257 constitute a Cupin type-1 1 domain; it reads INALEPDHRV…TFNTEEDTAK (220 aa). 3 disordered regions span residues 109 to 141, 196 to 236, and 275 to 304; these read CPQT…RFRK, PETQ…GNSV, and GLRI…GRNG. Low complexity predominate over residues 117–129; the sequence is RSSQSRQGSRQQQ. The segment covering 284–293 has biased composition (acidic residues); that stretch reads QQEEEEEEEE. Residues 316 to 463 enclose the Cupin type-1 2 domain; the sequence is ENIAQPARAD…AFGLRQRQVT (148 aa).

Belongs to the 11S seed storage protein (globulins) family. As to quaternary structure, hexamer; each subunit is composed of an acidic and a basic chain derived from a single precursor and linked by a disulfide bond.

Functionally, this protein found in the seeds of many leguminous and non-leguminous plants is the source of sulfur-containing amino acids in seed meals. The chain is Legumin type B (LEB4) from Vicia faba (Broad bean).